Here is a 339-residue protein sequence, read N- to C-terminus: Anthranilate phosphoribosyltransferase (339 aa).

Residues glycine 79, 82–83, serine 87, 89–92, 107–115, and serine 119 each bind 5-phospho-alpha-D-ribose 1-diphosphate; these read GD, NIST, and KHGNRSISS. Glycine 79 is an anthranilate binding site. Serine 91 contacts Mg(2+). Asparagine 110 is a binding site for anthranilate. Arginine 165 lines the anthranilate pocket. Positions 224 and 225 each coordinate Mg(2+).

The protein belongs to the anthranilate phosphoribosyltransferase family. As to quaternary structure, homodimer. Mg(2+) is required as a cofactor.

It carries out the reaction N-(5-phospho-beta-D-ribosyl)anthranilate + diphosphate = 5-phospho-alpha-D-ribose 1-diphosphate + anthranilate. It functions in the pathway amino-acid biosynthesis; L-tryptophan biosynthesis; L-tryptophan from chorismate: step 2/5. In terms of biological role, catalyzes the transfer of the phosphoribosyl group of 5-phosphorylribose-1-pyrophosphate (PRPP) to anthranilate to yield N-(5'-phosphoribosyl)-anthranilate (PRA). The chain is Anthranilate phosphoribosyltransferase from Listeria innocua serovar 6a (strain ATCC BAA-680 / CLIP 11262).